The chain runs to 237 residues: MRSGVIAQKLGMTRVYNDAGEHVPVTVLRMENCHVVAQRTVEKNGYTAVQLGVGMAKVKNTSKAMRGHFAKAEVEPKAKLAEFRVSPDNLLEVGVEITAEHFVAGQKVDVTGTSIGKGFAGVMKRHNFGGHRASHGNSITHRSHGSTGQRQDPGKVFKGKKMAGHMGQTRVTTQNIEVVSTDSDRGLILVRGAVPGSKGAWILVRDAVKASLPENAPKPAGLRAGAKAEAAATEGAE.

Disordered regions lie at residues 133-155 (ASHG…DPGK) and 213-237 (PENA…EGAE). Positions 135–150 (HGNSITHRSHGSTGQR) are enriched in polar residues. Glutamine 151 bears the N5-methylglutamine mark. Positions 220–237 (AGLRAGAKAEAAATEGAE) are enriched in low complexity.

It belongs to the universal ribosomal protein uL3 family. As to quaternary structure, part of the 50S ribosomal subunit. Forms a cluster with proteins L14 and L19. In terms of processing, methylated by PrmB.

One of the primary rRNA binding proteins, it binds directly near the 3'-end of the 23S rRNA, where it nucleates assembly of the 50S subunit. The chain is Large ribosomal subunit protein uL3 from Brucella canis (strain ATCC 23365 / NCTC 10854 / RM-666).